The following is a 372-amino-acid chain: GDP-mannose 4,6-dehydratase (372 aa).

Residues 9–14 (GVTGQD), 64–65 (DL), 86–90 (LGAQS), and tyrosine 101 each bind NADP(+). Threonine 133 is an active-site residue. Active-site nucleophile residues include glutamate 135 and tyrosine 157. Residues lysine 161, histidine 187, and arginine 192 each coordinate NADP(+).

Belongs to the NAD(P)-dependent epimerase/dehydratase family. GDP-mannose 4,6-dehydratase subfamily. NADP(+) serves as cofactor.

The catalysed reaction is GDP-alpha-D-mannose = GDP-4-dehydro-alpha-D-rhamnose + H2O. It functions in the pathway nucleotide-sugar biosynthesis; GDP-L-fucose biosynthesis via de novo pathway; GDP-L-fucose from GDP-alpha-D-mannose: step 1/2. Functionally, catalyzes the conversion of GDP-D-mannose to GDP-4-dehydro-6-deoxy-D-mannose. The sequence is that of GDP-mannose 4,6-dehydratase from Vibrio cholerae.